Consider the following 631-residue polypeptide: Sphingomyelin phosphodiesterase (631 aa).

The segment at M1–G23 is disordered. Positions M1–A46 are cleaved as a signal peptide. In terms of domain architecture, Saposin B-type spans G87 to D171. A glycan (N-linked (GlcNAc...) asparagine) is linked at N88. Intrachain disulfides connect C91–C167, C94–C159, and C122–C133. N177 is a glycosylation site (N-linked (GlcNAc...) asparagine). D208 and H210 together coordinate Zn(2+). Intrachain disulfides connect C223–C228 and C229–C252. Zn(2+) is bound by residues D280 and N320. N337 and N397 each carry an N-linked (GlcNAc...) asparagine glycan. Cysteines 387 and 433 form a disulfide. Residues H427, H459, and H461 each coordinate Zn(2+). N-linked (GlcNAc...) asparagine glycosylation occurs at N505. Residue S510 is modified to Phosphoserine; by PKC/PRKCD. An N-linked (GlcNAc...) asparagine glycan is attached at N522. 2 cysteine pairs are disulfide-bonded: C586–C590 and C596–C609.

This sequence belongs to the acid sphingomyelinase family. As to quaternary structure, monomer. Interacts with SORT1; the interaction is required for SMPD1 targeting to lysosomes. Zn(2+) serves as cofactor. Post-translationally, proteolytically processed. Mature lysosomal form arises from C-terminal proteolytic processing of pro-sphingomyelin phosphodiesterase. In terms of processing, this form is generated following cleavage by CASP7 in the extracellular milieu. It shows increased activity. Both lysosomal and secreted forms are glycosylated but they show a differential pattern of glycosylation. Post-translationally, phosphorylated at Ser-510 by PRKCD upon stress stimuli. Phosphorylation is required for secretion.

The protein localises to the lysosome. Its subcellular location is the lipid droplet. The protein resides in the secreted. It is found in the extracellular space. The catalysed reaction is a sphingomyelin + H2O = phosphocholine + an N-acylsphing-4-enine + H(+). It carries out the reaction N-(octadecanoyl)-sphing-4-enine-1-phosphocholine + H2O = N-octadecanoylsphing-4-enine + phosphocholine + H(+). It catalyses the reaction 1,2-dihexadecanoyl-sn-glycero-3-phosphocholine + H2O = 1,2-dihexadecanoyl-sn-glycerol + phosphocholine + H(+). The enzyme catalyses a 1,2-diacyl-sn-glycero-3-phosphocholine + H2O = phosphocholine + a 1,2-diacyl-sn-glycerol + H(+). With respect to regulation, hydrolysis of liposomal sphingomyelin is stimulated by incorporation of diacylglycerol (DAG), ceramide and free fatty acids into the liposomal membranes. Phosphatidylcholine hydrolysis is inhibited by incorporation of cholesterol, ceramide, DAG, monoacylglycerol and fatty acids. Antidepressants, namely amitriptyline, imipramine, desipramine, fluoxetine, sertraline, escitalopram, and maprotiline inhibit sphingomyelin phosphodiesterase activity. (Microbial infection) The secretory form is activated by P.aeruginosa, this activation results in the release of ceramide in the outer leaflet of the plasma membrane. Its activity is regulated as follows. (Microbial infection) The secretory form is activated by human coronavirus SARS-CoV-2, this activation results in the release of ceramide in the outer leaflet of the plasma membrane. Functionally, converts sphingomyelin to ceramide. Exists as two enzymatic forms that arise from alternative trafficking of a single protein precursor, one that is targeted to the endolysosomal compartment, whereas the other is released extracellularly. However, in response to various forms of stress, lysosomal exocytosis may represent a major source of the secretory form. Its function is as follows. In the lysosomes, converts sphingomyelin to ceramide. Plays an important role in the export of cholesterol from the intraendolysosomal membranes. Also has phospholipase C activities toward 1,2-diacylglycerolphosphocholine and 1,2-diacylglycerolphosphoglycerol. Modulates stress-induced apoptosis through the production of ceramide. When secreted, modulates cell signaling with its ability to reorganize the plasma membrane by converting sphingomyelin to ceramide. Secreted form is increased in response to stress and inflammatory mediators such as IL1B, IFNG or TNF as well as upon infection with bacteria and viruses. Produces the release of ceramide in the outer leaflet of the plasma membrane playing a central role in host defense. Ceramide reorganizes these rafts into larger signaling platforms that are required to internalize P.aeruginosa, induce apoptosis and regulate the cytokine response in infected cells. In wounded cells, the lysosomal form is released extracellularly in the presence of Ca(2+) and promotes endocytosis and plasma membrane repair. In terms of biological role, this form is generated following cleavage by CASP7 in the extracellular milieu in response to bacterial infection. It shows increased ability to convert sphingomyelin to ceramide and promotes plasma membrane repair. Plasma membrane repair by ceramide counteracts the action of gasdermin-D (GSDMD) perforin (PRF1) pores that are formed in response to bacterial infection. Functionally, (Microbial infection) Secretion is activated by bacteria such as P.aeruginosa, N.gonorrhoeae and others, this activation results in the release of ceramide in the outer leaflet of the plasma membrane which facilitates the infection. Its function is as follows. (Microbial infection) Secretion is activated by human coronaviruses SARS-CoV and SARS-CoV-2 as well as Zaire ebolavirus, this activation results in the release of ceramide in the outer leaflet of the plasma membrane which facilitates the infection. Lacks residues that bind the cofactor Zn(2+) and has no enzyme activity. The protein is Sphingomyelin phosphodiesterase of Homo sapiens (Human).